The sequence spans 67 residues: Phycobilisome 7.8 kDa linker polypeptide, allophycocyanin-associated, core (67 aa).

Residues 1-56 (MRVFKVTACVPSQTRIRTQRELQNTYFTKLVPYDNWFREQQRIMKMGGKIVKVELA) enclose the CpcD-like domain.

This sequence belongs to the phycobilisome linker protein family.

Its subcellular location is the cellular thylakoid membrane. Functionally, rod linker protein, associated with allophycocyanin. Linker polypeptides determine the state of aggregation and the location of the disk-shaped phycobiliprotein units within the phycobilisome and modulate their spectroscopic properties in order to mediate a directed and optimal energy transfer. This chain is Phycobilisome 7.8 kDa linker polypeptide, allophycocyanin-associated, core (apcC), found in Arthrospira platensis (Spirulina platensis).